The following is a 918-amino-acid chain: Non-lysosomal glucosylceramidase (918 aa).

The disordered stretch occupies residues 886 to 918 (HKKSRRPSVTQGTGLSTQPECGPKRSLANLNSE). Over residues 892-904 (PSVTQGTGLSTQP) the composition is skewed to polar residues. At S893 the chain carries Phosphoserine.

It belongs to the non-lysosomal glucosylceramidase family. As to expression, widely expressed at low level. Highly expressed in testis and brain. Ubiquitously expressed in the brain (at protein level). Expressed by Sertoli cells (at protein level).

The protein localises to the endoplasmic reticulum membrane. It localises to the golgi apparatus membrane. The enzyme catalyses a beta-D-glucosyl-(1&lt;-&gt;1')-N-acylsphing-4-enine + H2O = an N-acylsphing-4-enine + D-glucose. It carries out the reaction a beta-D-galactosyl-(1&lt;-&gt;1')-N-acylsphing-4-enine + H2O = an N-acylsphing-4-enine + D-galactose. It catalyses the reaction beta-D-glucosyl-(1-&gt;3)-O-lithocholate + H2O = lithocholate + D-glucose. The catalysed reaction is beta-D-glucosyl-(1-&gt;3)-O-chenodeoxycholate + H2O = chenodeoxycholate + D-glucose. The enzyme catalyses a di-trans,poly-cis-dolichyl beta-D-glucosyl phosphate + chenodeoxycholate = beta-D-glucosyl-(1-&gt;3)-O-chenodeoxycholate + a di-trans,poly-cis-dolichyl phosphate + H(+). It carries out the reaction octyl beta-D-glucose + chenodeoxycholate = beta-D-glucosyl-(1-&gt;3)-O-chenodeoxycholate + octan-1-ol. It catalyses the reaction cholesteryl 3-beta-D-glucoside + H2O = cholesterol + D-glucose. The catalysed reaction is a beta-D-glucosyl-(1&lt;-&gt;1')-N-acylsphing-4-enine + cholesterol = cholesteryl 3-beta-D-glucoside + an N-acylsphing-4-enine. The enzyme catalyses beta-D-glucosyl-N-(9Z-octadecenoyl)-sphing-4E-enine + cholesterol = N-(9Z-octadecenoyl)-sphing-4-enine + cholesteryl 3-beta-D-glucoside. It carries out the reaction a beta-D-galactosyl-(1&lt;-&gt;1')-N-acylsphing-4-enine + cholesterol = cholesteryl 3-beta-D-galactoside + an N-acylsphing-4-enine. It catalyses the reaction 1-(beta-D-galactosyl)-N-dodecanoylsphing-4-enine + cholesterol = cholesteryl 3-beta-D-galactoside + N-dodecanoylsphing-4-enine. The protein operates within lipid metabolism; sphingolipid metabolism. Its pathway is steroid metabolism; cholesterol metabolism. Enzymatic activity is dependent on membrane association and requires the presence of lipids. Inhibited by N-(adamantanemethyloxypentyl)-deoxynojirimycin/AMP-DNM. Inhibited by its product sphingosine/N-acylsphing-4-enine in a feedback loop. Also inhibited by other non-acetylated sphingoid bases and their derivatives but not by sphingosine-1-phosphate and complex sphingolipids. Non-lysosomal glucosylceramidase that catalyzes the hydrolysis of glucosylceramides/GlcCers (such as beta-D-glucosyl-(1&lt;-&gt;1')-N-acylsphing-4-enine) to free glucose and ceramides (such as N-acylsphing-4-enine). GlcCers are membrane glycosphingolipids that have a wide intracellular distribution. They are the main precursors of more complex glycosphingolipids that play a role in cellular growth, differentiation, adhesion, signaling, cytoskeletal dynamics and membrane properties. Also involved in the transglucosylation of cholesterol, transferring glucose from GlcCer, thereby modifying its water solubility and biological properties. Under specific conditions, may catalyze the reverse reaction, transferring glucose from cholesteryl-3-beta-D-glucoside to ceramide (such as N-acylsphing-4-enine). May play a role in the metabolism of bile acids. Able to hydrolyze bile acid 3-O-glucosides as well as to produce bile acid-glucose conjugates thanks to a bile acid glucosyl transferase activity. Catalyzes the hydrolysis of galactosylceramides/GalCers (such as beta-D-galactosyl-(1&lt;-&gt;1')-N-acylsphing-4-enine), as well as galactosyl transfer between GalCers and cholesterol in vitro with lower activity compared with their activity against GlcCers. This is Non-lysosomal glucosylceramidase from Mus musculus (Mouse).